Reading from the N-terminus, the 279-residue chain is Urease accessory protein UreD (279 aa).

The protein belongs to the UreD family. As to quaternary structure, ureD, UreF and UreG form a complex that acts as a GTP-hydrolysis-dependent molecular chaperone, activating the urease apoprotein by helping to assemble the nickel containing metallocenter of UreC. The UreE protein probably delivers the nickel.

It localises to the cytoplasm. Functionally, required for maturation of urease via the functional incorporation of the urease nickel metallocenter. This Brucella suis (strain ATCC 23445 / NCTC 10510) protein is Urease accessory protein UreD.